Consider the following 216-residue polypeptide: Protein Syd (216 aa).

The protein belongs to the Syd family.

It is found in the cell inner membrane. Its function is as follows. Interacts with the SecY protein in vivo. May bind preferentially to an uncomplexed state of SecY, thus functioning either as a chelating agent for excess SecY in the cell or as a regulatory factor that negatively controls the translocase function. The protein is Protein Syd of Shewanella baltica (strain OS155 / ATCC BAA-1091).